Consider the following 396-residue polypeptide: Maltose/maltodextrin-binding periplasmic protein (396 aa).

The signal sequence occupies residues 1–26 (MKIKTGVGILALSALTTMMISAPALA).

The protein belongs to the bacterial solute-binding protein 1 family. The complex is composed of two ATP-binding proteins (MalK), two transmembrane proteins (MalG and MalF) and a solute-binding protein (MalE).

It localises to the periplasm. In terms of biological role, part of the ABC transporter complex MalEFGK involved in maltose/maltodextrin import. Binds maltose and higher maltodextrins. The polypeptide is Maltose/maltodextrin-binding periplasmic protein (malE) (Salmonella typhimurium (strain LT2 / SGSC1412 / ATCC 700720)).